The chain runs to 143 residues: Regulator of ribonuclease activity B (143 aa).

The tract at residues 113–143 is disordered; that stretch reads EDPNAEEDEYGDDGEFFDDEDEADFNNAKVH. The segment covering 115–136 has biased composition (acidic residues); sequence PNAEEDEYGDDGEFFDDEDEAD.

This sequence belongs to the RraB family. Interacts with the C-terminal region of Rne.

Its subcellular location is the cytoplasm. Globally modulates RNA abundance by binding to RNase E (Rne) and regulating its endonucleolytic activity. Can modulate Rne action in a substrate-dependent manner by altering the composition of the degradosome. This Haemophilus ducreyi (strain 35000HP / ATCC 700724) protein is Regulator of ribonuclease activity B.